The following is a 2533-amino-acid chain: Highly reducing polyketide synthase azaB (2533 aa).

A Ketosynthase family 3 (KS3) domain is found at 7–433 (TAPMAIIGMA…GSNAHAILES (427 aa)). Residues Cys-180, His-315, and His-355 each act as for beta-ketoacyl synthase activity in the active site. Residues 554-821 (WVFTGQGAQW…VEFESSFRHM (268 aa)) form a malonyl-CoA:ACP transacylase (MAT) domain region. The interval 946–1081 (SDLVGYSQPS…GRISVITTSD (136 aa)) is N-terminal hotdog fold. A PKS/mFAS DH domain is found at 946 to 1254 (SDLVGYSQPS…CQSLGRALDR (309 aa)). Residues 947–1251 (DLVGYSQPSI…GLTCQSLGRA (305 aa)) are dehydratase (DH) domain. His-978 acts as the Proton acceptor; for dehydratase activity in catalysis. Positions 1097–1254 (YNRRIDPRYM…CQSLGRALDR (158 aa)) are C-terminal hotdog fold. Asp-1163 functions as the Proton donor; for dehydratase activity in the catalytic mechanism. The segment at 1419-1554 (TRQVSELVRL…GGKLILMETT (136 aa)) is methyltransferase (CMet) domain. Residues 1839 to 2155 (GLIDTLVFHD…TGQHMGKIII (317 aa)) form an enoyl reductase (ER) domain region. The segment at 2178–2349 (ASYVIVGGLG…AVSLDLGIVR (172 aa)) is ketoreductase (KR) domain. The 78-residue stretch at 2455 to 2532 (DAAALICQEL…DLSLRVATKR (78 aa)) folds into the Carrier domain. Ser-2492 is subject to O-(pantetheine 4'-phosphoryl)serine.

It participates in secondary metabolite biosynthesis. Functionally, highly reducing polyketide synthase; part of the gene cluster that mediates the biosynthesis of azaphilones, a class of fungal metabolites characterized by a highly oxygenated pyrano-quinone bicyclic core and exhibiting a broad range of bioactivities. In the first step, the non-reducing polyketide synthase azaA forms the hexaketide precursor from successive condensations of five malonyl-CoA units, presumably with a simple acetyl-CoA starter unit. The reactive polyketide chain then undergoes a PT-mediated C2-C7 cyclization to afford the aromatic ring and is eventually released as an aldehyde through the R-domain. The putative ketoreductase azaE is proposed to catalyze the reduction of the terminal ketone resulting in the early culture product FK17-P2a. The monooxygenase azaH was demonstrated to be the only enzyme required to convert FK17-P2a to azanigerone E. AzaH first hydroxylates the benzaldehyde intermediate FK17-P2a at C4, which triggers the formation of the pyran-ring to afford azanigerone E. In parallel, the 2,4-dimethylhexanoyl chain is synthesized by the HR-PKS azaB and is proposed to be transferred to the C4-hydroxyl of azanigerone E by the acyltransferase azaD directly from the ACP domain of azaB. Alternatively, the 2,4-dimethyl-hexanoyl chain may be offloaded from the HR-PKS as a carboxylic acid and converted to an acyl-CoA by azaF. The resulting acyl-CoA molecule could then be taken up as a substrate by AzaD to form azanigerone B. To yield the carboxylic acid substituent in azanigerone A, the hydroxypropyl side chain of azanigerone B would need to undergo a C-C oxidative cleavage catalyzed by cytochrome P450 AzaI. AzaI is proposed to act on a vicinal diol that leads to a C-C bond scission either through an alkoxyradical intermediate or a peroxy complex. In the biosynthesis of azanigerone A, azanigerone B first undergoes hydroxylation at C10, possibly catalyzed by one of the two FAD-dependent monooxygenases encoded in the cluster, azaG or azaL, resulting in the vicinal diol azanigerone C. Oxidative cleavage of azanigerone C by azaI would yield the corresponding aldehyde derivative of azanigerone A. Finally, the dehydrogenase azaJ is proposed to convert the aldehyde functional group into the carboxylic acid, completing the conversion from azanigerone B to azanigerone A. Alternatively, the oxidation of aldehyde to carboxylic acid may be catalyzed by the same P450 enzyme azaI via consecutive oxidation or by endogenous alcohol dehydrogenase. The protein is Highly reducing polyketide synthase azaB of Aspergillus niger (strain ATCC 1015 / CBS 113.46 / FGSC A1144 / LSHB Ac4 / NCTC 3858a / NRRL 328 / USDA 3528.7).